We begin with the raw amino-acid sequence, 81 residues long: MNPTVAAASVIAAALAVGLAAIGPGVGQGTASGEAVSGIARQPEAEGRIRGTLLLSLAFMESLTIYGLVIALVLLFANPFA.

2 helical membrane passes run 5–25 and 57–77; these read VAAA…IGPG and LAFM…LLFA.

The protein belongs to the ATPase C chain family. As to quaternary structure, F-type ATPases have 2 components, F(1) - the catalytic core - and F(0) - the membrane proton channel. F(1) has five subunits: alpha(3), beta(3), gamma(1), delta(1), epsilon(1). F(0) has four main subunits: a(1), b(1), b'(1) and c(10-14). The alpha and beta chains form an alternating ring which encloses part of the gamma chain. F(1) is attached to F(0) by a central stalk formed by the gamma and epsilon chains, while a peripheral stalk is formed by the delta, b and b' chains.

The protein localises to the cellular thylakoid membrane. In terms of biological role, f(1)F(0) ATP synthase produces ATP from ADP in the presence of a proton or sodium gradient. F-type ATPases consist of two structural domains, F(1) containing the extramembraneous catalytic core and F(0) containing the membrane proton channel, linked together by a central stalk and a peripheral stalk. During catalysis, ATP synthesis in the catalytic domain of F(1) is coupled via a rotary mechanism of the central stalk subunits to proton translocation. Its function is as follows. Key component of the F(0) channel; it plays a direct role in translocation across the membrane. A homomeric c-ring of between 10-14 subunits forms the central stalk rotor element with the F(1) delta and epsilon subunits. This Microcystis aeruginosa (strain NIES-843 / IAM M-2473) protein is ATP synthase subunit c.